The primary structure comprises 179 residues: Large ribosomal subunit protein uL6 (179 aa).

This sequence belongs to the universal ribosomal protein uL6 family. Part of the 50S ribosomal subunit.

Functionally, this protein binds to the 23S rRNA, and is important in its secondary structure. It is located near the subunit interface in the base of the L7/L12 stalk, and near the tRNA binding site of the peptidyltransferase center. The protein is Large ribosomal subunit protein uL6 of Trichodesmium erythraeum (strain IMS101).